We begin with the raw amino-acid sequence, 227 residues long: uncharacterized protein (227 aa).

The protein localises to the virion. This is an uncharacterized protein from Acanthamoeba polyphaga (Amoeba).